We begin with the raw amino-acid sequence, 378 residues long: Putative F-box protein At4g17565 (378 aa).

One can recognise an F-box domain in the interval 16–63 (PKWSELCPDLLRSIFEQLSFTNLNRAKLVCRSWNSASRGCVPKRNQIP).

In Arabidopsis thaliana (Mouse-ear cress), this protein is Putative F-box protein At4g17565.